A 381-amino-acid chain; its full sequence is Meiotic recombination protein SPO11-1 (381 aa).

In terms of domain architecture, Topo IIA-type catalytic spans 23–162 (EEAATLLHRI…LNVVPVAKGL (140 aa)). Tyrosine 123 acts as the O-(5'-phospho-DNA)-tyrosine intermediate in catalysis. 2 residues coordinate Mg(2+): glutamate 209 and aspartate 261.

Belongs to the TOP6A family. The cofactor is Mg(2+). As to expression, highly expressed in flowers before pollination. Expressed in roots and shoots.

Its subcellular location is the nucleus. The catalysed reaction is ATP-dependent breakage, passage and rejoining of double-stranded DNA.. In terms of biological role, required for meiotic recombination. Mediates DNA cleavage that forms the double-strand breaks (DSB) that initiate meiotic recombination. May be involved in plant growth and development, and stress tolerance. This chain is Meiotic recombination protein SPO11-1 (SPO11-1), found in Oryza sativa subsp. indica (Rice).